Reading from the N-terminus, the 273-residue chain is Exosporium protein C (273 aa).

It is found in the spore wall. This is Exosporium protein C from Clostridium sporogenes (strain ATCC 15579).